A 31-amino-acid polypeptide reads, in one-letter code: Sarcolipin (31 aa).

The Cytoplasmic segment spans residues 1–7 (MGINTRE). Residues 8–26 (LFLNFTIVLITVILMWLLV) form a helical membrane-spanning segment. At 27-31 (RSYQY) the chain is on the lumenal side.

The protein belongs to the sarcolipin family. As to quaternary structure, homooligomer. Can also form heterooligomers with other sarcoplasmic/endoplasmic reticulum calcium ATPase (SERCA) regulators ARLN, ERLN, PLN and STRIT1/DWORF. Monomer. Interacts with calcium ATPase ATP2A1/SERCA1. Interacts as a monomer with ATP2A2/SERCA2; the interaction decreases ATP2A2 Ca(2+) affinity. Interacts with VMP1; VMP1 competes with PLN and SLN to prevent them from forming an inhibitory complex with ATP2A2.

It is found in the sarcoplasmic reticulum membrane. The protein resides in the endoplasmic reticulum membrane. Its function is as follows. Reversibly inhibits the activity of ATP2A1/SERCA1 and ATP2A2/SERCA2 in sarcoplasmic reticulum by decreasing the apparent affinity of the ATPase for Ca(2+). Also inhibits the activity of ATP2A3/SERCA3. Modulates calcium re-uptake during muscle relaxation and plays an important role in calcium homeostasis in muscle. Required for muscle-based, non-shivering thermogenesis. The protein is Sarcolipin of Homo sapiens (Human).